Reading from the N-terminus, the 114-residue chain is UPF0342 protein NT01CX_2274 (114 aa).

It belongs to the UPF0342 family.

The chain is UPF0342 protein NT01CX_2274 from Clostridium novyi (strain NT).